The following is a 236-amino-acid chain: 2,3,4,5-tetrahydropyridine-2,6-dicarboxylate N-acetyltransferase (236 aa).

The protein belongs to the transferase hexapeptide repeat family. DapH subfamily.

The enzyme catalyses (S)-2,3,4,5-tetrahydrodipicolinate + acetyl-CoA + H2O = L-2-acetamido-6-oxoheptanedioate + CoA. Its pathway is amino-acid biosynthesis; L-lysine biosynthesis via DAP pathway; LL-2,6-diaminopimelate from (S)-tetrahydrodipicolinate (acetylase route): step 1/3. Catalyzes the transfer of an acetyl group from acetyl-CoA to tetrahydrodipicolinate. The polypeptide is 2,3,4,5-tetrahydropyridine-2,6-dicarboxylate N-acetyltransferase (Oceanobacillus iheyensis (strain DSM 14371 / CIP 107618 / JCM 11309 / KCTC 3954 / HTE831)).